Here is a 410-residue protein sequence, read N- to C-terminus: Peptidase T (410 aa).

Histidine 79 is a binding site for Zn(2+). Residue aspartate 81 is part of the active site. Zn(2+) is bound at residue aspartate 142. Glutamate 176 acts as the Proton acceptor in catalysis. Positions 177, 199, and 381 each coordinate Zn(2+).

This sequence belongs to the peptidase M20B family. Zn(2+) is required as a cofactor.

The protein resides in the cytoplasm. It carries out the reaction Release of the N-terminal residue from a tripeptide.. In terms of biological role, cleaves the N-terminal amino acid of tripeptides. The protein is Peptidase T of Bacillus velezensis (strain DSM 23117 / BGSC 10A6 / LMG 26770 / FZB42) (Bacillus amyloliquefaciens subsp. plantarum).